The primary structure comprises 245 residues: tRNA pseudouridine synthase A (245 aa).

The Nucleophile role is filled by D52. Residue Y111 coordinates substrate.

The protein belongs to the tRNA pseudouridine synthase TruA family. As to quaternary structure, homodimer.

The enzyme catalyses uridine(38/39/40) in tRNA = pseudouridine(38/39/40) in tRNA. Its function is as follows. Formation of pseudouridine at positions 38, 39 and 40 in the anticodon stem and loop of transfer RNAs. The chain is tRNA pseudouridine synthase A from Bradyrhizobium sp. (strain BTAi1 / ATCC BAA-1182).